A 406-amino-acid polypeptide reads, in one-letter code: MTFLQRLQGLADNKICAFAWFVVRRFDEERVPQAAASMTFTTLLALVPVLTVMVAVASIFPVFDRWSDSFVSFVNQTIVPQGADMVFDYINAFREQANRLTAIGSVMLVVTSLMLIRTIDNTFNRIWRVNSQRPWMMQFLVYWALLTFGPLSLGVGISFMVGSVQDAALASGAPQWSGALRTAATLTFMTLLLWGLYRFVPNRFVPARQAFVGALATAFCLETARSLFTWYMGNFDGYRSIYGAFAAVPFFLLWLNLLWTLVLGGAVLTSSLSYWQGEAFRRGFDSRGRFDDVLKILLLLDAAQKEGKALPVQEFRRHINMGYDELGELLEKLARHGYIYSGRQGWVLKTGADSIELNELFKLFVYRPLPVERDHVNQAVDAVMTPCLQTLNMTLAEFDAQAKKRQ.

Transmembrane regions (helical) follow at residues 43–63 (LLAL…FPVF), 100–120 (LTAI…RTID), 139–159 (FLVY…GISF), 176–196 (WSGA…LWGL), 210–230 (AFVG…LFTW), and 248–268 (VPFF…GAVL).

The protein belongs to the UPF0761 family.

It is found in the cell inner membrane. In Neisseria meningitidis serogroup B (strain ATCC BAA-335 / MC58), this protein is UPF0761 membrane protein NMB0524.